Here is a 457-residue protein sequence, read N- to C-terminus: tRNA-2-methylthio-N(6)-dimethylallyladenosine synthase (457 aa).

Positions 3–120 (KKVYVKTFGC…LPQMIDARRE (118 aa)) constitute an MTTase N-terminal domain. [4Fe-4S] cluster contacts are provided by Cys-12, Cys-49, Cys-83, Cys-157, Cys-161, and Cys-164. The Radical SAM core domain occupies 143–377 (RVEGPSAFVS…QATIEENVAR (235 aa)). One can recognise a TRAM domain in the interval 380-447 (QSMLGKVERI…PHSLRGELVL (68 aa)).

This sequence belongs to the methylthiotransferase family. MiaB subfamily. Monomer. [4Fe-4S] cluster is required as a cofactor.

Its subcellular location is the cytoplasm. It catalyses the reaction N(6)-dimethylallyladenosine(37) in tRNA + (sulfur carrier)-SH + AH2 + 2 S-adenosyl-L-methionine = 2-methylsulfanyl-N(6)-dimethylallyladenosine(37) in tRNA + (sulfur carrier)-H + 5'-deoxyadenosine + L-methionine + A + S-adenosyl-L-homocysteine + 2 H(+). Functionally, catalyzes the methylthiolation of N6-(dimethylallyl)adenosine (i(6)A), leading to the formation of 2-methylthio-N6-(dimethylallyl)adenosine (ms(2)i(6)A) at position 37 in tRNAs that read codons beginning with uridine. The chain is tRNA-2-methylthio-N(6)-dimethylallyladenosine synthase from Burkholderia mallei (strain NCTC 10247).